The sequence spans 264 residues: Thymidylate synthase (264 aa).

Residue Arg21 participates in dUMP binding. His51 contributes to the (6R)-5,10-methylene-5,6,7,8-tetrahydrofolate binding site. DUMP is bound at residue 126–127; sequence RR. Cys146 (nucleophile) is an active-site residue. Residues 166-169, Asn177, and 207-209 each bind dUMP; these read RSAD and HLY. Position 169 (Asp169) interacts with (6R)-5,10-methylene-5,6,7,8-tetrahydrofolate. Ala263 is a binding site for (6R)-5,10-methylene-5,6,7,8-tetrahydrofolate.

The protein belongs to the thymidylate synthase family. Bacterial-type ThyA subfamily. As to quaternary structure, homodimer.

The protein resides in the cytoplasm. It carries out the reaction dUMP + (6R)-5,10-methylene-5,6,7,8-tetrahydrofolate = 7,8-dihydrofolate + dTMP. It participates in pyrimidine metabolism; dTTP biosynthesis. Its function is as follows. Catalyzes the reductive methylation of 2'-deoxyuridine-5'-monophosphate (dUMP) to 2'-deoxythymidine-5'-monophosphate (dTMP) while utilizing 5,10-methylenetetrahydrofolate (mTHF) as the methyl donor and reductant in the reaction, yielding dihydrofolate (DHF) as a by-product. This enzymatic reaction provides an intracellular de novo source of dTMP, an essential precursor for DNA biosynthesis. In Bartonella bacilliformis (strain ATCC 35685 / KC583 / Herrer 020/F12,63), this protein is Thymidylate synthase.